The primary structure comprises 221 residues: tRNA (guanine-N(7)-)-methyltransferase (221 aa).

S-adenosyl-L-methionine-binding residues include glutamate 51, glutamate 76, aspartate 103, and aspartate 125. Residue aspartate 125 is part of the active site. Positions 129 and 161 each coordinate substrate.

Belongs to the class I-like SAM-binding methyltransferase superfamily. TrmB family.

The catalysed reaction is guanosine(46) in tRNA + S-adenosyl-L-methionine = N(7)-methylguanosine(46) in tRNA + S-adenosyl-L-homocysteine. It functions in the pathway tRNA modification; N(7)-methylguanine-tRNA biosynthesis. Catalyzes the formation of N(7)-methylguanine at position 46 (m7G46) in tRNA. In Wolbachia pipientis wMel, this protein is tRNA (guanine-N(7)-)-methyltransferase.